We begin with the raw amino-acid sequence, 115 residues long: Large ribosomal subunit protein bL20 (115 aa).

This sequence belongs to the bacterial ribosomal protein bL20 family.

Binds directly to 23S ribosomal RNA and is necessary for the in vitro assembly process of the 50S ribosomal subunit. It is not involved in the protein synthesizing functions of that subunit. In Synechococcus sp. (strain CC9311), this protein is Large ribosomal subunit protein bL20.